Consider the following 646-residue polypeptide: Cytochrome b translation regulator cbp8 (646 aa).

Component of a complex, at least composed of cbp7 and cbp8.

The protein resides in the mitochondrion. Translation factor for cob1/cytochrome b; plays a role in cob1 mRNA stabilization and required for correct folding of the protein. The polypeptide is Cytochrome b translation regulator cbp8 (Schizosaccharomyces pombe (strain 972 / ATCC 24843) (Fission yeast)).